The chain runs to 627 residues: MCGIVGYIGTQAATDILLAGLEKLEYRGYDSAGIATVWEGEINCVRAKGKLHNLRSKLELIETPAQIGIGHTRWATHGKPEEYNAHPHVDTAMPVAVQNGIIENYRELREELKAKGHVFRSETDTEVIPHLIAEILKNFSASSSSSDFLEAVSQAVNRLEGAFALAVVCADYPDELIVVRQQAPLVIGFGQGEFFCASDTPAIVAYTRAVLPLENGEIARLTPLGIEIYNFAGHRLKKQPRLLNLNPTMVVKTGFKHFMLKEIHEQPGVVRASLEAYFNNGRGKWRSPINLRLPENLYTDLEQIHIVACGTSWHAALIGKYLIEQLAGISTQVHYASEYRYAPSPLTSNTLIIGVTQSGETADTLAALAMEKERRQGKEAKYEARLLGITNRPESSLLSHLVPNIISTLAGIEIGVLATKTFTAQLMAFYALALDLAAHRQTASKETLEKIINGLREIPKDIESTLESQERLTEQLAHEFAETQDFIFLGRGINFPIALEGALKLKEISYIHAEGYPAGEMKHGPIALLDAKVPVVAIAVPGSVYEKVISNAQEAKARDSRLIGVTPVKDGEAGEIFNDLLPVSHVEELLSPLLTVVPLQLLAYHIAARRGLDVDQPRNLAKSVTVE.

Cys2 (nucleophile; for GATase activity) is an active-site residue. In terms of domain architecture, Glutamine amidotransferase type-2 spans 2-224; the sequence is CGIVGYIGTQ…NGEIARLTPL (223 aa). 2 SIS domains span residues 293 to 442 and 476 to 617; these read LPEN…HRQT and LAHE…VDQP. Lys622 (for Fru-6P isomerization activity) is an active-site residue.

Homodimer.

It localises to the cytoplasm. It catalyses the reaction D-fructose 6-phosphate + L-glutamine = D-glucosamine 6-phosphate + L-glutamate. Functionally, catalyzes the first step in hexosamine metabolism, converting fructose-6P into glucosamine-6P using glutamine as a nitrogen source. The sequence is that of Glutamine--fructose-6-phosphate aminotransferase [isomerizing] from Nostoc sp. (strain PCC 9229).